The following is a 134-amino-acid chain: Profilin-3 (134 aa).

Cys13 and Cys118 form a disulfide bridge. Residues 84–100 (AVIRGKKGSGGITIKKT) carry the Involved in PIP2 interaction motif. At Thr114 the chain carries Phosphothreonine.

This sequence belongs to the profilin family. As to quaternary structure, occurs in many kinds of cells as a complex with monomeric actin in a 1:1 ratio. Phosphorylated by MAP kinases.

It localises to the cytoplasm. The protein localises to the cytoskeleton. Binds to actin and affects the structure of the cytoskeleton. At high concentrations, profilin prevents the polymerization of actin, whereas it enhances it at low concentrations. This is Profilin-3 from Olea europaea (Common olive).